A 196-amino-acid polypeptide reads, in one-letter code: Large ribosomal subunit protein bL9 (196 aa).

Positions Asn-172–Ala-196 are disordered. Residues Phe-181–Ala-196 are compositionally biased toward acidic residues.

It belongs to the bacterial ribosomal protein bL9 family.

Functionally, binds to the 23S rRNA. The polypeptide is Large ribosomal subunit protein bL9 (Chelativorans sp. (strain BNC1)).